Reading from the N-terminus, the 357-residue chain is 3-isopropylmalate dehydrogenase (357 aa).

76–89 is an NAD(+) binding site; sequence GPQWDTIDPSLRPE. Residues arginine 96, arginine 106, arginine 134, and aspartate 224 each coordinate substrate. Mg(2+) is bound by residues aspartate 224, aspartate 248, and aspartate 252. 282–294 contributes to the NAD(+) binding site; the sequence is GSAPDIAGKGIAN.

It belongs to the isocitrate and isopropylmalate dehydrogenases family. LeuB type 1 subfamily. As to quaternary structure, homodimer. The cofactor is Mg(2+). Mn(2+) serves as cofactor.

Its subcellular location is the cytoplasm. The enzyme catalyses (2R,3S)-3-isopropylmalate + NAD(+) = 4-methyl-2-oxopentanoate + CO2 + NADH. It functions in the pathway amino-acid biosynthesis; L-leucine biosynthesis; L-leucine from 3-methyl-2-oxobutanoate: step 3/4. Its function is as follows. Catalyzes the oxidation of 3-carboxy-2-hydroxy-4-methylpentanoate (3-isopropylmalate) to 3-carboxy-4-methyl-2-oxopentanoate. The product decarboxylates to 4-methyl-2 oxopentanoate. The sequence is that of 3-isopropylmalate dehydrogenase from Xanthomonas euvesicatoria pv. vesicatoria (strain 85-10) (Xanthomonas campestris pv. vesicatoria).